A 518-amino-acid chain; its full sequence is MDMAFVEVCLRMLLVFVLSWTIFHVNNRKKKKATKLADLATEERKEGGPDVIIVGAGVGGSALAYALAKDGRRVHVIERDMREPVRMMGEFMQPGGRLMLSKLGLQDCLEEIDAQKSTGIRLFKDGKETVACFPVDTNFPYEPSGRFFHNGRFVQRLRQKASSLPNVRLEEGTVRSLIEEKGVVKGVTYKNSSGEETTSFAPLTVVCDGCHSNLRRSLNDNNAEVTAYEIGYISRNCRLEQPDKLHLIMAKPSFAMLYQVSSTDVRCNFELLSKNLPSVSNGEMTSFVRNSIAPQVPLKLRKTFLKGLDEGSHIKITQAKRIPATLSRKKGVIVLGDAFNMRHPVIASGMMVLLSDILILSRLLKPLGNLGDENKVSEVMKSFYALRKPMSATVNTLGNSFWQVLIASTDEAKEAMRQGCFDYLSSGGFRTSGLMALIGGMNPRPLSLFYHLFVISLSSIGQLLSPFPTPLRVWHSLRLLDLSLKMLVPHLKAEGIGQMLSPTNAAAYRKSYMAATVV.

Transmembrane regions (helical) follow at residues 3–23 and 48–68; these read MAFVEVCLRMLLVFVLSWTIF and GPDVIIVGAGVGGSALAYALA. FAD is bound by residues 58 to 59, 78 to 79, arginine 86, phenylalanine 91, arginine 158, valine 174, aspartate 337, and methionine 350; these read VG and ER. A helical transmembrane segment spans residues 448 to 468; that stretch reads LFYHLFVISLSSIGQLLSPFP.

This sequence belongs to the squalene monooxygenase family. Requires FAD as cofactor.

The protein localises to the membrane. It catalyses the reaction squalene + reduced [NADPH--hemoprotein reductase] + O2 = (S)-2,3-epoxysqualene + oxidized [NADPH--hemoprotein reductase] + H2O + H(+). The protein operates within terpene metabolism; lanosterol biosynthesis; lanosterol from farnesyl diphosphate: step 2/3. Its function is as follows. Catalyzes the stereospecific oxidation of squalene to (S)-2,3-epoxysqualene, and is considered to be a rate-limiting enzyme in steroid biosynthesis. In Brassica napus (Rape), this protein is Squalene monooxygenase 1,2 (SQP1,2).